The following is a 207-amino-acid chain: MKLQVAIDLLSTEAALELAGKVAEYVDIIELGTPLIEAEGLSVITAVKKAHPDKIVFADMKTMDAGELEADIAFKAGADLVTVLGSADDSTIAGAVKAAQAHNKGVVVDLIGIEDKATRAQEVRALGAKFVEMHAGLDEQAKPGFDLNGLLAAGEKARVPFSVAGGVKVATIPAVQKAGAEVAVAGGAIYGAADPAAAAKELRAAIA.

The protein belongs to the HPS/KGPDC family. HPS subfamily.

It carries out the reaction D-ribulose 5-phosphate + formaldehyde = D-arabino-hex-3-ulose 6-phosphate. The protein operates within one-carbon metabolism; formaldehyde assimilation via RuMP pathway; D-fructose 6-phosphate from D-ribulose 5-phosphate and formaldehyde: step 1/2. Catalyzes the condensation of ribulose 5-phosphate with formaldehyde to form 3-hexulose 6-phosphate. This Mycobacterium gastri protein is 3-hexulose-6-phosphate synthase (rmpA).